The following is a 393-amino-acid chain: NAD(P)H-quinone oxidoreductase subunit H, chloroplastic (393 aa).

Belongs to the complex I 49 kDa subunit family. NDH is composed of at least 16 different subunits, 5 of which are encoded in the nucleus.

The protein localises to the plastid. It localises to the chloroplast thylakoid membrane. The catalysed reaction is a plastoquinone + NADH + (n+1) H(+)(in) = a plastoquinol + NAD(+) + n H(+)(out). The enzyme catalyses a plastoquinone + NADPH + (n+1) H(+)(in) = a plastoquinol + NADP(+) + n H(+)(out). NDH shuttles electrons from NAD(P)H:plastoquinone, via FMN and iron-sulfur (Fe-S) centers, to quinones in the photosynthetic chain and possibly in a chloroplast respiratory chain. The immediate electron acceptor for the enzyme in this species is believed to be plastoquinone. Couples the redox reaction to proton translocation, and thus conserves the redox energy in a proton gradient. The protein is NAD(P)H-quinone oxidoreductase subunit H, chloroplastic of Nuphar advena (Common spatterdock).